The chain runs to 547 residues: Chaperonin GroEL (547 aa).

ATP is bound by residues 30–33 (TLGP), K51, 87–91 (DGTTT), G415, and D496. A disordered region spans residues 527 to 547 (KKDSPAMPGGGGMGGMGGMDF). A compositionally biased stretch (gly residues) spans 534–547 (PGGGGMGGMGGMDF).

It belongs to the chaperonin (HSP60) family. Forms a cylinder of 14 subunits composed of two heptameric rings stacked back-to-back. Interacts with the co-chaperonin GroES.

The protein localises to the cytoplasm. The enzyme catalyses ATP + H2O + a folded polypeptide = ADP + phosphate + an unfolded polypeptide.. Its function is as follows. Together with its co-chaperonin GroES, plays an essential role in assisting protein folding. The GroEL-GroES system forms a nano-cage that allows encapsulation of the non-native substrate proteins and provides a physical environment optimized to promote and accelerate protein folding. The chain is Chaperonin GroEL from Methylocella silvestris (strain DSM 15510 / CIP 108128 / LMG 27833 / NCIMB 13906 / BL2).